Reading from the N-terminus, the 208-residue chain is Small ribosomal subunit protein uS4 (208 aa).

An S4 RNA-binding domain is found at 98–161 (RRLDNVIYRM…KELEIIKESL (64 aa)).

Belongs to the universal ribosomal protein uS4 family. Part of the 30S ribosomal subunit. Contacts protein S5. The interaction surface between S4 and S5 is involved in control of translational fidelity.

Functionally, one of the primary rRNA binding proteins, it binds directly to 16S rRNA where it nucleates assembly of the body of the 30S subunit. In terms of biological role, with S5 and S12 plays an important role in translational accuracy. The chain is Small ribosomal subunit protein uS4 from Thermodesulfovibrio yellowstonii (strain ATCC 51303 / DSM 11347 / YP87).